A 324-amino-acid chain; its full sequence is Beta-ketoacyl-[acyl-carrier-protein] synthase III (324 aa).

Catalysis depends on residues cysteine 114 and histidine 246. The interval 247–251 is ACP-binding; it reads QANLR. Residue asparagine 276 is part of the active site.

It belongs to the thiolase-like superfamily. FabH family. Homodimer.

The protein localises to the cytoplasm. The enzyme catalyses malonyl-[ACP] + acetyl-CoA + H(+) = 3-oxobutanoyl-[ACP] + CO2 + CoA. Its pathway is lipid metabolism; fatty acid biosynthesis. In terms of biological role, catalyzes the condensation reaction of fatty acid synthesis by the addition to an acyl acceptor of two carbons from malonyl-ACP. Catalyzes the first condensation reaction which initiates fatty acid synthesis and may therefore play a role in governing the total rate of fatty acid production. Possesses both acetoacetyl-ACP synthase and acetyl transacylase activities. Its substrate specificity determines the biosynthesis of branched-chain and/or straight-chain of fatty acids. This chain is Beta-ketoacyl-[acyl-carrier-protein] synthase III, found in Campylobacter jejuni subsp. jejuni serotype O:2 (strain ATCC 700819 / NCTC 11168).